The chain runs to 342 residues: Cell cycle control protein 50C (342 aa).

Over 1–33 (MEMMPQYDLSRLPENTALKQQTLPTQQLNLSAS) the chain is Cytoplasmic. A helical transmembrane segment spans residues 34–54 (VVLSIFFITGGFCLSIGIILL). The Extracellular segment spans residues 55-306 (LSAKSTKKIE…STLTWIGGGG (252 aa)). Residues asparagine 66, asparagine 80, asparagine 89, and asparagine 205 are each glycosylated (N-linked (GlcNAc...) asparagine). Residues 307–327 (LFLGLTYTVTGALTLLASFAI) form a helical membrane-spanning segment. The Cytoplasmic segment spans residues 328 to 342 (LTIHLMLKRSKLNFL).

This sequence belongs to the CDC50/LEM3 family. Specifically expressed in testis.

It localises to the membrane. In Mus musculus (Mouse), this protein is Cell cycle control protein 50C (Tmem30c).